The primary structure comprises 609 residues: Glutamine--fructose-6-phosphate aminotransferase [isomerizing] (609 aa).

The Nucleophile; for GATase activity role is filled by Cys-2. The Glutamine amidotransferase type-2 domain maps to 2–217 (CGIVGAIAGR…DGDTAEIRRD (216 aa)). SIS domains are found at residues 285–425 (AESV…LRGA) and 458–599 (WAEC…VDKP). The active-site For Fru-6P isomerization activity is Lys-604.

Homodimer.

It is found in the cytoplasm. The enzyme catalyses D-fructose 6-phosphate + L-glutamine = D-glucosamine 6-phosphate + L-glutamate. In terms of biological role, catalyzes the first step in hexosamine metabolism, converting fructose-6P into glucosamine-6P using glutamine as a nitrogen source. The polypeptide is Glutamine--fructose-6-phosphate aminotransferase [isomerizing] (Xylella fastidiosa (strain Temecula1 / ATCC 700964)).